The following is a 39-amino-acid chain: Photosystem II reaction center protein L (39 aa).

Residues 18–38 (SLYLGLLLVFVLGILFSSYFF) form a helical membrane-spanning segment.

This sequence belongs to the PsbL family. As to quaternary structure, PSII is composed of 1 copy each of membrane proteins PsbA, PsbB, PsbC, PsbD, PsbE, PsbF, PsbH, PsbI, PsbJ, PsbK, PsbL, PsbM, PsbT, PsbX, PsbY, Psb30/Ycf12, peripheral proteins PsbO, CyanoQ (PsbQ), PsbU, PsbV and a large number of cofactors. It forms dimeric complexes.

The protein localises to the cellular thylakoid membrane. In terms of biological role, one of the components of the core complex of photosystem II (PSII). PSII is a light-driven water:plastoquinone oxidoreductase that uses light energy to abstract electrons from H(2)O, generating O(2) and a proton gradient subsequently used for ATP formation. It consists of a core antenna complex that captures photons, and an electron transfer chain that converts photonic excitation into a charge separation. This subunit is found at the monomer-monomer interface and is required for correct PSII assembly and/or dimerization. The protein is Photosystem II reaction center protein L of Prochlorococcus marinus (strain SARG / CCMP1375 / SS120).